We begin with the raw amino-acid sequence, 642 residues long: Chaperone protein HtpG (642 aa).

Residues 1–349 are a; substrate-binding; that stretch reads MSAATETEVR…SADLPLNVSR (349 aa). Residues 216-238 are disordered; sequence ELPPAPPAKEGEEPEPPKTPEWE. A compositionally biased stretch (basic and acidic residues) spans 224 to 236; the sequence is KEGEEPEPPKTPE. Positions 350-570 are b; it reads EILQQNRQVE…AHDMSATLER (221 aa). The interval 571 to 642 is c; sequence LLKEAGQEVP…VKRLNKLLMG (72 aa).

The protein belongs to the heat shock protein 90 family. In terms of assembly, homodimer.

It localises to the cytoplasm. Its function is as follows. Molecular chaperone. Has ATPase activity. This is Chaperone protein HtpG from Magnetococcus marinus (strain ATCC BAA-1437 / JCM 17883 / MC-1).